Consider the following 169-residue polypeptide: ATP synthase subunit b (169 aa).

The helical transmembrane segment at 3 to 23 (IKILLLVLPFFAFASEHGGVN) threads the bilayer.

It belongs to the ATPase B chain family. As to quaternary structure, F-type ATPases have 2 components, F(1) - the catalytic core - and F(0) - the membrane proton channel. F(1) has five subunits: alpha(3), beta(3), gamma(1), delta(1), epsilon(1). F(0) has three main subunits: a(1), b(2) and c(10-14). The alpha and beta chains form an alternating ring which encloses part of the gamma chain. F(1) is attached to F(0) by a central stalk formed by the gamma and epsilon chains, while a peripheral stalk is formed by the delta and b chains.

The protein localises to the cell inner membrane. F(1)F(0) ATP synthase produces ATP from ADP in the presence of a proton or sodium gradient. F-type ATPases consist of two structural domains, F(1) containing the extramembraneous catalytic core and F(0) containing the membrane proton channel, linked together by a central stalk and a peripheral stalk. During catalysis, ATP synthesis in the catalytic domain of F(1) is coupled via a rotary mechanism of the central stalk subunits to proton translocation. In terms of biological role, component of the F(0) channel, it forms part of the peripheral stalk, linking F(1) to F(0). In Campylobacter curvus (strain 525.92), this protein is ATP synthase subunit b.